The primary structure comprises 389 residues: Lipid-A-disaccharide synthase (389 aa).

Belongs to the LpxB family.

It catalyses the reaction a lipid X + a UDP-2-N,3-O-bis[(3R)-3-hydroxyacyl]-alpha-D-glucosamine = a lipid A disaccharide + UDP + H(+). The protein operates within bacterial outer membrane biogenesis; LPS lipid A biosynthesis. Functionally, condensation of UDP-2,3-diacylglucosamine and 2,3-diacylglucosamine-1-phosphate to form lipid A disaccharide, a precursor of lipid A, a phosphorylated glycolipid that anchors the lipopolysaccharide to the outer membrane of the cell. This is Lipid-A-disaccharide synthase from Burkholderia ambifaria (strain MC40-6).